The chain runs to 393 residues: S-adenosylmethionine synthase 2 (393 aa).

E9 contacts Mg(2+). ATP is bound at residue H15. E43 contributes to the K(+) binding site. Residues E56 and Q99 each coordinate L-methionine. Residues 167-169, 235-238, D246, 252-253, A269, K273, and K277 each bind ATP; these read DGK, SGRF, and RK. Position 246 (D246) interacts with L-methionine. An L-methionine-binding site is contributed by K277.

Belongs to the AdoMet synthase family. Homotetramer. It depends on Mn(2+) as a cofactor. The cofactor is Mg(2+). Co(2+) serves as cofactor. K(+) is required as a cofactor. In terms of tissue distribution, mostly expressed in roots. Also present in stems and leaves.

It localises to the cytoplasm. It catalyses the reaction L-methionine + ATP + H2O = S-adenosyl-L-methionine + phosphate + diphosphate. It functions in the pathway amino-acid biosynthesis; S-adenosyl-L-methionine biosynthesis; S-adenosyl-L-methionine from L-methionine: step 1/1. Catalyzes the formation of S-adenosylmethionine from methionine and ATP. The reaction comprises two steps that are both catalyzed by the same enzyme: formation of S-adenosylmethionine (AdoMet) and triphosphate, and subsequent hydrolysis of the triphosphate. The polypeptide is S-adenosylmethionine synthase 2 (SAM2) (Solanum lycopersicum (Tomato)).